The chain runs to 564 residues: Dihydroxy-acid dehydratase (564 aa).

Asp-80 is a Mg(2+) binding site. [2Fe-2S] cluster is bound at residue Cys-121. Residues Asp-122 and Lys-123 each coordinate Mg(2+). Lys-123 carries the post-translational modification N6-carboxylysine. Cys-194 contributes to the [2Fe-2S] cluster binding site. Glu-447 is a Mg(2+) binding site. The active-site Proton acceptor is Ser-473.

This sequence belongs to the IlvD/Edd family. Homodimer. Requires [2Fe-2S] cluster as cofactor. Mg(2+) serves as cofactor.

It carries out the reaction (2R)-2,3-dihydroxy-3-methylbutanoate = 3-methyl-2-oxobutanoate + H2O. The enzyme catalyses (2R,3R)-2,3-dihydroxy-3-methylpentanoate = (S)-3-methyl-2-oxopentanoate + H2O. Its pathway is amino-acid biosynthesis; L-isoleucine biosynthesis; L-isoleucine from 2-oxobutanoate: step 3/4. The protein operates within amino-acid biosynthesis; L-valine biosynthesis; L-valine from pyruvate: step 3/4. Functionally, functions in the biosynthesis of branched-chain amino acids. Catalyzes the dehydration of (2R,3R)-2,3-dihydroxy-3-methylpentanoate (2,3-dihydroxy-3-methylvalerate) into 2-oxo-3-methylpentanoate (2-oxo-3-methylvalerate) and of (2R)-2,3-dihydroxy-3-methylbutanoate (2,3-dihydroxyisovalerate) into 2-oxo-3-methylbutanoate (2-oxoisovalerate), the penultimate precursor to L-isoleucine and L-valine, respectively. This Listeria monocytogenes serotype 4b (strain CLIP80459) protein is Dihydroxy-acid dehydratase.